Consider the following 481-residue polypeptide: 3-ketoacyl-CoA synthase 8 (481 aa).

The next 2 membrane-spanning stretches (helical) occupy residues 4–24 (LKMVFFKILFISLMAGLAMKG) and 44–64 (LQTISLLLFLVVFVWILYMLT). One can recognise an FAE domain in the interval 61-358 (YMLTRPKPVY…FFITFVKKKY (298 aa)). Residues Cys-213, His-292, His-376, His-380, His-409, and Asn-413 contribute to the active site.

This sequence belongs to the thiolase-like superfamily. Chalcone/stilbene synthases family. As to expression, expressed in leaves and seedlings.

It is found in the endoplasmic reticulum membrane. It catalyses the reaction a very-long-chain acyl-CoA + malonyl-CoA + H(+) = a very-long-chain 3-oxoacyl-CoA + CO2 + CoA. It functions in the pathway lipid metabolism; fatty acid biosynthesis. This chain is 3-ketoacyl-CoA synthase 8, found in Arabidopsis thaliana (Mouse-ear cress).